Consider the following 128-residue polypeptide: RxLR effector protein SFI2 (128 aa).

The first 22 residues, 1–22 (MRSAFYIFLVVAVLARCSVVAA), serve as a signal peptide directing secretion. The RxLR-dEER motif lies at 52–71 (RLLRVAGREDDDATTDEEDR).

Belongs to the RxLR effector family.

It localises to the secreted. The protein resides in the host nucleus. Functionally, effector that suppresses flg22-induced post-translational MAP kinase activation both tomato and Arabidopsis. The perception of highly conserved pathogen- or microbe-associated molecular patterns (PAMPs/MAMPs), such as flg22, triggers converging signaling pathways recruiting MAP kinase cascades and inducing transcriptional re-programming, yielding a generic antimicrobial response. This chain is RxLR effector protein SFI2, found in Phytophthora infestans (strain T30-4) (Potato late blight agent).